Here is a 187-residue protein sequence, read N- to C-terminus: Avirulence protein ATR39-2 (187 aa).

The signal sequence occupies residues 1-20; the sequence is MVKCTPLLALTVIVSAGSDA. The short motif at 49 to 66 is the RxLR-dEER element; the sequence is RVLRASDVPNEVAAGESR.

It belongs to the RxLR effector family.

It localises to the secreted. Its subcellular location is the host cell. Secreted effector that acts as an elicitor of hypersensitive response (HR) specifically on plants carrying defense protein RPP39. The allele ATR39-1 is recognized by RPP39, whereas the ATR39-2 allele is nor recognized. The chain is Avirulence protein ATR39-2 from Hyaloperonospora arabidopsidis (strain Emoy2) (Downy mildew agent).